A 527-amino-acid polypeptide reads, in one-letter code: Bifunctional purine biosynthesis protein PurH (527 aa).

The MGS-like domain occupies 1–149; that stretch reads MTADLLPVRR…KNFARVAVAT (149 aa).

This sequence belongs to the PurH family.

The catalysed reaction is (6R)-10-formyltetrahydrofolate + 5-amino-1-(5-phospho-beta-D-ribosyl)imidazole-4-carboxamide = 5-formamido-1-(5-phospho-D-ribosyl)imidazole-4-carboxamide + (6S)-5,6,7,8-tetrahydrofolate. It catalyses the reaction IMP + H2O = 5-formamido-1-(5-phospho-D-ribosyl)imidazole-4-carboxamide. It functions in the pathway purine metabolism; IMP biosynthesis via de novo pathway; 5-formamido-1-(5-phospho-D-ribosyl)imidazole-4-carboxamide from 5-amino-1-(5-phospho-D-ribosyl)imidazole-4-carboxamide (10-formyl THF route): step 1/1. It participates in purine metabolism; IMP biosynthesis via de novo pathway; IMP from 5-formamido-1-(5-phospho-D-ribosyl)imidazole-4-carboxamide: step 1/1. The sequence is that of Bifunctional purine biosynthesis protein PurH from Stenotrophomonas maltophilia (strain K279a).